We begin with the raw amino-acid sequence, 243 residues long: ATP synthase subunit a (243 aa).

7 helical membrane passes run Asn29–Leu49, Ile54–Ile74, Val89–Phe109, His114–Phe134, Ile144–Phe164, Ile182–Leu202, and Ile208–Phe228.

It belongs to the ATPase A chain family. In terms of assembly, F-type ATPases have 2 components, CF(1) - the catalytic core - and CF(0) - the membrane proton channel. CF(1) has five subunits: alpha(3), beta(3), gamma(1), delta(1), epsilon(1). CF(0) has three main subunits: a(1), b(2) and c(9-12). The alpha and beta chains form an alternating ring which encloses part of the gamma chain. CF(1) is attached to CF(0) by a central stalk formed by the gamma and epsilon chains, while a peripheral stalk is formed by the delta and b chains.

The protein resides in the cell inner membrane. In terms of biological role, key component of the proton channel; it plays a direct role in the translocation of protons across the membrane. This is ATP synthase subunit a from Ehrlichia canis (strain Jake).